The primary structure comprises 1413 residues: MSLSSGACGGKGVDANPVETYDSGDEWDIGVGNLIIDLDADLEKDQQKLEMSGSKEVGIPAPNAVATLPDNIKFVTPVPGPQGKEGKSKSKRSKSGKDASKPTPGTSLFSPSEGAASKKEVQGRAGDGASAGGLVAAVAPKGSEKAAKASRSVAGSKKEKENSSSKGKKERSEGVGTCSEKDPGVLQPVPLGGRGSQYDGSAGMDTGTVEPLGSIAIEPGAALNPLGTKPEPEEGENECRPLKKVKSEKMESPVSTPAVLPLHLLVPVVNNDISSPCEQIMVRTRSVGVNTCDVALATEPECLGPCEPGTSVNLEGIVWQETEDGMLVVNVTWRNKTYVGTLLDCTRHDWAPPRFCDSPTSDLEMRNGRGRGKRMRPSSNTPVSEAAAASDSKGTSSSSKTRAGANSKGRRGSQNSSEHRPPASSTSEDVKASPSSANKRKSKPLSDMELNSSSEDSKGSKRVRTNSMGSATGPLPGTKVEPTLVDRNCPSPVLIDCPHPNCNKKYKHINGLKYHQAHAHTDDDSKPEADGDSEYGEEPALHADLSCNGAPVPQKGSLSPARSATPKVRLVEPHSPSPSSKFSTKGLCKKKLSGEGDTDPGALSNDGSDDGPSVMDETSNDAFDSLERKCMEKEKCKKPSSLKSEKIPSKSLKSARPIAPAIPPQQIYTFQTATFTAASPGSSSGLTTTVVQAMPNSPQLKPIQPKPTVMGEPFTVNPALTPAKDKKKKDKKKKDSSKELESPLTPGKVCRAEEGKSPFRDAAGDGIKVESLLNGSSESHQSRLASIKAEADKIYSFTDNAPSPSIGGSSRLDSTTPTQPLTPLHVVTQNGAEASSVKTNSPAYSDISDAGEDGEGKVDSAKSKDPEQLVKEGAKKTLFPPQPQSKDSPYYQGFESYYSPGYAQSSPGTLTSSSQAGMEGQPLKTKKDEEPESVEGKVKNDVCEEKKPELSNSSQQPSVIQQRPNMYMQSLYYNQYAYVPPYGYSDQSYHSHLLSTNTAYRQQYEEQQKRQSLEQQQQQQRGLDKKTEMGLKEREASLKEEWKQKPSIPPTLTKAPSLTDLVKSGPGKAKEPGTDPAKSVIIPKLDDSSKLPSQPPEGLKGKLGEASHLGKEASEAKTGTECGRQAEVDPILWYRQETESRMWTYVYPAKYSDIKSEDDRWKEERDRKLKEDRSRSKDSVPKEDGKESTSSDCKLPPSEESRLGSKEPRPSVHVPVSSPLTQHQSYIPYMHGYSYSQSYDPNHPSYRGMPAVMMQNYPGSYLPSSYSFSPYGSKVSGGEDADKARASPSVSCKASSESKALDILQQHASHYKSKSPTISDKNSQERDRGGCGVVGGGGSCGSVAGAGGTDRSADRPRTSPSQRLMSTHHHHHHLGYSLLPAQYNLPYAAGLSSTAIVASQQGSTPSLYPPPRR.

Disordered stretches follow at residues 1–26 (MSLS…SGDE), 47–196 (QKLE…GRGS), 354–484 (RFCD…EPTL), 517–659 (AHAH…RPIA), and 695–765 (PNSP…AAGD). Serine 358, serine 361, and serine 379 each carry phosphoserine. Threonine 381 carries the phosphothreonine modification. The span at 386–405 (AAAASDSKGTSSSSKTRAGA) shows a compositional bias: low complexity. Phosphoserine is present on residues serine 413, serine 433, serine 446, serine 452, serine 467, and serine 470. Positions 423–437 (ASSTSEDVKASPSSA) are enriched in polar residues. A Glycyl lysine isopeptide (Lys-Gly) (interchain with G-Cter in SUMO2) cross-link involves residue lysine 479. Residues 495-520 (IDCPHPNCNKKYKHINGLKYHQAHAH) form a C2H2-type zinc finger. Residues 519 to 529 (AHTDDDSKPEA) are compositionally biased toward basic and acidic residues. Residues serine 533, serine 575, and serine 577 each carry the phosphoserine modification. The span at 625-648 (SLERKCMEKEKCKKPSSLKSEKIP) shows a compositional bias: basic and acidic residues. A compositionally biased stretch (basic residues) spans 725–735 (DKKKKDKKKKD). Serine 742 bears the Phosphoserine mark. Phosphothreonine is present on threonine 745. Residues 750-763 (CRAEEGKSPFRDAA) are compositionally biased toward basic and acidic residues. Serine 757 carries the phosphoserine modification. Lysine 788 participates in a covalent cross-link: Glycyl lysine isopeptide (Lys-Gly) (interchain with G-Cter in SUMO2). Residues 797-843 (FTDNAPSPSIGGSSRLDSTTPTQPLTPLHVVTQNGAEASSVKTNSPA) are compositionally biased toward polar residues. Disordered stretches follow at residues 797-962 (FTDN…VIQQ), 1004-1127 (YEEQ…RQAE), 1154-1221 (IKSE…SPLT), and 1273-1369 (SKVS…STHH). Serine 803 carries the post-translational modification Phosphoserine. A Phosphothreonine modification is found at threonine 822. Phosphoserine occurs at positions 841, 845, and 848. A compositionally biased stretch (basic and acidic residues) spans 854–875 (GEGKVDSAKSKDPEQLVKEGAK). Residues 902–916 (YAQSSPGTLTSSSQA) show a composition bias toward polar residues. A compositionally biased stretch (basic and acidic residues) spans 925 to 949 (TKKDEEPESVEGKVKNDVCEEKKPE). A compositionally biased stretch (polar residues) spans 950–962 (LSNSSQQPSVIQQ). Positions 1022–1044 (GLDKKTEMGLKEREASLKEEWKQ) are enriched in basic and acidic residues. At serine 1057 the chain carries Phosphoserine. A Glycyl lysine isopeptide (Lys-Gly) (interchain with G-Cter in SUMO2) cross-link involves residue lysine 1063. Basic and acidic residues-rich tracts occupy residues 1099 to 1115 (LKGK…EASE), 1154 to 1189 (IKSE…KEST), and 1197 to 1210 (PSEE…EPRP). Lysine 1155 is covalently cross-linked (Glycyl lysine isopeptide (Lys-Gly) (interchain with G-Cter in SUMO2)). Positions 1288-1298 (PSVSCKASSES) are enriched in polar residues. A Glycyl lysine isopeptide (Lys-Gly) (interchain with G-Cter in SUMO2) cross-link involves residue lysine 1299. The segment covering 1330-1348 (GCGVVGGGGSCGSVAGAGG) has biased composition (gly residues).

As to quaternary structure, interacts (via N-terminus) with NIPBL. Interacts with the multiprotein complex Integrator. As to expression, expressed in myoblasts. Expressed in neurons in various brain regions, including striatum, prefrontal cortex, olfactory bulb, midbrain, cerebellum and hippocampus. Expressed in neural stem cells (at protein level). Expressed in thymocytes.

The protein resides in the nucleus. Transcription factor, which activates RAG1, and possibly RAG2, transcription. Through the regulation of RAG1/2 expression, may regulate thymocyte maturation. Along with NIPBL and the multiprotein complex Integrator, promotes cortical neuron migration during brain development by regulating the transcription of crucial genes in this process. Preferentially binds promoters containing paused RNA polymerase II. Up-regulates the expression of SEMA3A, NRP1, PLXND1 and GABBR2 genes, among others. Its function is as follows. Involved in regulation of myoblast proliferation during myogenesis. The sequence is that of Zinc finger protein 609 (Znf609) from Mus musculus (Mouse).